Consider the following 490-residue polypeptide: GTPase Der (490 aa).

2 EngA-type G domains span residues Phe3 to Glu167 and Leu203 to Asn378. Residues Gly9–Ser16, Asp56–Leu60, Asn119–Glu122, Gly209–Ser216, Asp256–Met260, and Asn321–Asp324 each bind GTP. The region spanning Arg379–Ala465 is the KH-like domain. The disordered stretch occupies residues Pro451–Gly490. Basic residues predominate over residues Lys469–Gly484.

This sequence belongs to the TRAFAC class TrmE-Era-EngA-EngB-Septin-like GTPase superfamily. EngA (Der) GTPase family. In terms of assembly, associates with the 50S ribosomal subunit.

GTPase that plays an essential role in the late steps of ribosome biogenesis. This Dinoroseobacter shibae (strain DSM 16493 / NCIMB 14021 / DFL 12) protein is GTPase Der.